The following is a 298-amino-acid chain: Acetylglutamate kinase (298 aa).

Residues 69–70 (GG), R91, and N196 contribute to the substrate site.

It belongs to the acetylglutamate kinase family. ArgB subfamily.

Its subcellular location is the cytoplasm. The enzyme catalyses N-acetyl-L-glutamate + ATP = N-acetyl-L-glutamyl 5-phosphate + ADP. Its pathway is amino-acid biosynthesis; L-arginine biosynthesis; N(2)-acetyl-L-ornithine from L-glutamate: step 2/4. Its function is as follows. Catalyzes the ATP-dependent phosphorylation of N-acetyl-L-glutamate. This is Acetylglutamate kinase from Nitrobacter winogradskyi (strain ATCC 25391 / DSM 10237 / CIP 104748 / NCIMB 11846 / Nb-255).